The sequence spans 511 residues: Cytochrome P450 monooxygenase PUL2 (511 aa).

Residues 14 to 34 form a helical membrane-spanning segment; it reads WMAFVYFTPVLFVVLYLLKEW. N116, N141, and N442 each carry an N-linked (GlcNAc...) asparagine glycan. C462 contributes to the heme binding site.

The protein belongs to the cytochrome P450 family. Requires heme as cofactor.

The protein resides in the membrane. It participates in siderophore biosynthesis. In terms of biological role, cytochrome P450 monooxygenase; part of the PUL gene cluster that mediates the formation of pulcherrimin, a red iron-containing pigment composed of two cyclized and modified leucine molecules that acts as a siderophore, a chelator that binds iron outside the cell for subsequent uptake. Two leucine molecules are cyclized via a cyclodipeptide synthase, and the resulting diketopiperazine is oxidized by a cytochrome P450 monooxygenase to generate pulcherriminic acid (PA), which can then spontaneously bind iron to form pulcherrimin. The probable cyclodipeptide synthase PUL1 and the cytochrome P450 monooxygenase PUL2 encode the enzymes responsible for the two-step pulcherrimin biosynthesis pathway. This Kluyveromyces lactis (strain ATCC 8585 / CBS 2359 / DSM 70799 / NBRC 1267 / NRRL Y-1140 / WM37) (Yeast) protein is Cytochrome P450 monooxygenase PUL2.